A 134-amino-acid chain; its full sequence is Ribonuclease VapC11 (134 aa).

Residues I2–T126 form the PINc domain. 2 residues coordinate Mg(2+): D5 and D98.

The protein belongs to the PINc/VapC protein family. Mg(2+) serves as cofactor.

In terms of biological role, toxic component of a type II toxin-antitoxin (TA) system. Acts as an RNase. Its toxic effects on cell growth and colony formation are neutralized by coexpression with cognate antitoxin VapB11. This chain is Ribonuclease VapC11, found in Mycobacterium tuberculosis (strain CDC 1551 / Oshkosh).